Here is a 309-residue protein sequence, read N- to C-terminus: MGYKHKDLIGTRELSKEEILYFLEAAKEFKELNLSQVKKNDYLRGKTTINAFYENSTRTRTSFEIAAKRLGADTINFSSSNSSVTKGESLNDTMNNMAAMRTDIIVLRHPSSGAAKFAADRTEASVVNAGDGTNEHPSQALLDLFTLREHGKILDKNLNVAIIGDIARSRVARSDIWAMKKFGINLKLFAPRMMMPKDAEVFESQICKNMEEACEGSDVIIMLRIQLERGGADVAFPSSREYSKFFGLNKNRIKLAKPDAIVLHPGPINRGVELNSDVADGTHSVILNQVENGVAIRMAILNTLAKNRG.

Carbamoyl phosphate contacts are provided by arginine 58 and threonine 59. Lysine 86 provides a ligand contact to L-aspartate. Carbamoyl phosphate contacts are provided by arginine 108, histidine 136, and glutamine 139. Positions 170 and 224 each coordinate L-aspartate. Carbamoyl phosphate contacts are provided by glycine 266 and proline 267.

The protein belongs to the aspartate/ornithine carbamoyltransferase superfamily. ATCase family. In terms of assembly, heterododecamer (2C3:3R2) of six catalytic PyrB chains organized as two trimers (C3), and six regulatory PyrI chains organized as three dimers (R2).

The catalysed reaction is carbamoyl phosphate + L-aspartate = N-carbamoyl-L-aspartate + phosphate + H(+). It participates in pyrimidine metabolism; UMP biosynthesis via de novo pathway; (S)-dihydroorotate from bicarbonate: step 2/3. In terms of biological role, catalyzes the condensation of carbamoyl phosphate and aspartate to form carbamoyl aspartate and inorganic phosphate, the committed step in the de novo pyrimidine nucleotide biosynthesis pathway. The chain is Aspartate carbamoyltransferase catalytic subunit from Campylobacter concisus (strain 13826).